Here is a 154-residue protein sequence, read N- to C-terminus: Myoglobin (154 aa).

One can recognise a Globin domain in the interval 2-148 (GLSDGEWQLV…FRNDMAAKYK (147 aa)). The residue at position 4 (Ser4) is a Phosphoserine. Nitrite is bound at residue His65. His65 contacts O2. Thr68 bears the Phosphothreonine mark. His94 is a heme b binding site.

Belongs to the globin family. Monomeric.

The protein resides in the cytoplasm. It is found in the sarcoplasm. It catalyses the reaction Fe(III)-heme b-[protein] + nitric oxide + H2O = Fe(II)-heme b-[protein] + nitrite + 2 H(+). It carries out the reaction H2O2 + AH2 = A + 2 H2O. Functionally, monomeric heme protein which primary function is to store oxygen and facilitate its diffusion within muscle tissues. Reversibly binds oxygen through a pentacoordinated heme iron and enables its timely and efficient release as needed during periods of heightened demand. Depending on the oxidative conditions of tissues and cells, and in addition to its ability to bind oxygen, it also has a nitrite reductase activity whereby it regulates the production of bioactive nitric oxide. Under stress conditions, like hypoxia and anoxia, it also protects cells against reactive oxygen species thanks to its pseudoperoxidase activity. This is Myoglobin (MB) from Aotus trivirgatus (Three-striped night monkey).